The following is a 459-amino-acid chain: Bifunctional protein GlmU (459 aa).

The tract at residues 1–230 (MVKRYAVILA…FDETIGINDR (230 aa)) is pyrophosphorylase. UDP-N-acetyl-alpha-D-glucosamine contacts are provided by residues 9–12 (LAAG), Lys-23, Gln-73, and 78–79 (GT). Asp-103 contributes to the Mg(2+) binding site. The UDP-N-acetyl-alpha-D-glucosamine site is built by Gly-140, Glu-155, Asn-170, and Asn-228. Asn-228 is a binding site for Mg(2+). Residues 231-251 (IALAEAERIMRDRICRQHMKN) form a linker region. An N-acetyltransferase region spans residues 252-459 (GVTIIDPACT…VDRLRGKKKS (208 aa)). Residues Arg-333 and Lys-351 each contribute to the UDP-N-acetyl-alpha-D-glucosamine site. His-363 functions as the Proton acceptor in the catalytic mechanism. The UDP-N-acetyl-alpha-D-glucosamine site is built by Tyr-366 and Asn-377. Acetyl-CoA contacts are provided by residues 386–387 (NY), Ala-423, and Arg-440.

The protein in the N-terminal section; belongs to the N-acetylglucosamine-1-phosphate uridyltransferase family. In the C-terminal section; belongs to the transferase hexapeptide repeat family. In terms of assembly, homotrimer. The cofactor is Mg(2+).

The protein localises to the cytoplasm. The enzyme catalyses alpha-D-glucosamine 1-phosphate + acetyl-CoA = N-acetyl-alpha-D-glucosamine 1-phosphate + CoA + H(+). It catalyses the reaction N-acetyl-alpha-D-glucosamine 1-phosphate + UTP + H(+) = UDP-N-acetyl-alpha-D-glucosamine + diphosphate. The protein operates within nucleotide-sugar biosynthesis; UDP-N-acetyl-alpha-D-glucosamine biosynthesis; N-acetyl-alpha-D-glucosamine 1-phosphate from alpha-D-glucosamine 6-phosphate (route II): step 2/2. It participates in nucleotide-sugar biosynthesis; UDP-N-acetyl-alpha-D-glucosamine biosynthesis; UDP-N-acetyl-alpha-D-glucosamine from N-acetyl-alpha-D-glucosamine 1-phosphate: step 1/1. Its pathway is bacterial outer membrane biogenesis; LPS lipid A biosynthesis. Its function is as follows. Catalyzes the last two sequential reactions in the de novo biosynthetic pathway for UDP-N-acetylglucosamine (UDP-GlcNAc). The C-terminal domain catalyzes the transfer of acetyl group from acetyl coenzyme A to glucosamine-1-phosphate (GlcN-1-P) to produce N-acetylglucosamine-1-phosphate (GlcNAc-1-P), which is converted into UDP-GlcNAc by the transfer of uridine 5-monophosphate (from uridine 5-triphosphate), a reaction catalyzed by the N-terminal domain. This Geobacillus thermodenitrificans (strain NG80-2) protein is Bifunctional protein GlmU.